The primary structure comprises 835 residues: Prickle-like protein 1-A (835 aa).

The region spanning 14-122 (FGCQRSSTSD…NIKMLSRAVM (109 aa)) is the PET domain. LIM zinc-binding domains are found at residues 124–188 (ATCE…ELLK), 189–249 (PRCS…HYAE), and 250–313 (YCES…EDVH). 4 disordered regions span residues 312–346 (VHAS…ADQC), 426–455 (LFQQ…QRNN), 603–706 (CQEK…RKRS), and 769–835 (CSSS…CIIS). Composition is skewed to basic and acidic residues over residues 432 to 453 (EDNR…DLQR), 603 to 614 (CQEKPPPEEKPM), and 646 to 655 (EIRRPPMSER). Basic residues-rich tracts occupy residues 669-683 (RPHH…KSRK) and 819-835 (SKSK…CIIS). At cysteine 832 the chain carries Cysteine methyl ester. Cysteine 832 is lipidated: S-farnesyl cysteine. Positions 833-835 (IIS) are cleaved as a propeptide — removed in mature form.

The protein belongs to the prickle / espinas / testin family. In terms of assembly, interacts with dvl2/dsh and mapk8/jnk1. Expressed in the dorsal marginal zone of early gastrulae (stage 10). As gastrulation proceeds, expression expands to include the lateral and ventral marginal zones, excluding the few rows of cells above the blastopore lip. Expression moves dorsally with gastrulation cell movements, and by the end of gastrulation expression is seen in dorsal mesoderm and posterior but not anterior neural ectoderm. Expression becomes down-regulated in mesoderm but remains strong in posterior ectoderm through the neurula stages. During tailbud stages, expressed in the pronephric duct, tailbud, tailtip and forming somites. In the most posterior regions, expressed in notochord and in the floorplate of the neural tube with weak expression in the roofplate. At stage 30, expressed in a complex pattern in the head including strong expression in the lens and otic vesicle.

Its subcellular location is the cell membrane. In terms of biological role, acts in a planar cell polarity (PCP) complex; polarization along the apical/basal axis of epithelial cells. Regulates the polarized assembly of fibronectrin on the surface of the mesoderm during gastrulation. Essential for gastrulation cell movements, cooperating with dvl2/dsh to activate jnk. Acts together with tes to control axial elongation. The sequence is that of Prickle-like protein 1-A (prickle1-a) from Xenopus laevis (African clawed frog).